The following is a 290-amino-acid chain: Nucleotide-binding protein Aave_3603 (290 aa).

13 to 20 serves as a coordination point for ATP; it reads GMSGSGKS. 62-65 serves as a coordination point for GTP; sequence DVRS.

Belongs to the RapZ-like family.

Its function is as follows. Displays ATPase and GTPase activities. The sequence is that of Nucleotide-binding protein Aave_3603 from Paracidovorax citrulli (strain AAC00-1) (Acidovorax citrulli).